A 330-amino-acid chain; its full sequence is MSQQIHLSIDAMGGDQGPRLVIEASIAFLKRYPHTRLTLFGDFADLEAAVKGSVCASRMSLIQTEITVAADERAGSALRHKQGSSMWKAVELVATGQADACVSGGNTGALMAMGRKLIKTFPGVSRPAICKPIPTARGSSFILDLGANLNCSAQQLVQFALMGSALARVYGRENPSVALLNVGTELSKGSESILTAAALMREHPTINFAGFVEGHGLYQGEVDVVVCDGLIGNVALKVSEGVAAFIASSLKAKLRENRFNQIAGLIVEPLLRRWMAAYNPSNFNGAAMLGLQRTLVKSHGGTDKFGFEQALVAAVDQVSANIPERIAQCL.

Belongs to the PlsX family. In terms of assembly, homodimer. Probably interacts with PlsY.

Its subcellular location is the cytoplasm. It carries out the reaction a fatty acyl-[ACP] + phosphate = an acyl phosphate + holo-[ACP]. It participates in lipid metabolism; phospholipid metabolism. Functionally, catalyzes the reversible formation of acyl-phosphate (acyl-PO(4)) from acyl-[acyl-carrier-protein] (acyl-ACP). This enzyme utilizes acyl-ACP as fatty acyl donor, but not acyl-CoA. This Teredinibacter turnerae (strain ATCC 39867 / T7901) protein is Phosphate acyltransferase.